The following is a 105-amino-acid chain: Putative pterin-4-alpha-carbinolamine dehydratase (105 aa).

It belongs to the pterin-4-alpha-carbinolamine dehydratase family.

The catalysed reaction is (4aS,6R)-4a-hydroxy-L-erythro-5,6,7,8-tetrahydrobiopterin = (6R)-L-erythro-6,7-dihydrobiopterin + H2O. The protein is Putative pterin-4-alpha-carbinolamine dehydratase of Sinorhizobium medicae (strain WSM419) (Ensifer medicae).